Reading from the N-terminus, the 476-residue chain is Sulfate adenylyltransferase subunit 1 (476 aa).

Residues 24–238 (KSLLRFLTCG…ELLEYVDIDR (215 aa)) enclose the tr-type G domain. The segment at 33–40 (GSVDDGKS) is G1. 33 to 40 (GSVDDGKS) contacts GTP. The G2 stretch occupies residues 91-95 (GITID). Residues 112-115 (DTPG) are G3. Residues 112–116 (DTPGH) and 167–170 (NKMD) each bind GTP. A G4 region spans residues 167-170 (NKMD). Residues 205–207 (SAL) are G5.

Belongs to the TRAFAC class translation factor GTPase superfamily. Classic translation factor GTPase family. CysN/NodQ subfamily. In terms of assembly, heterodimer composed of CysD, the smaller subunit, and CysN.

The catalysed reaction is sulfate + ATP + H(+) = adenosine 5'-phosphosulfate + diphosphate. It participates in sulfur metabolism; hydrogen sulfide biosynthesis; sulfite from sulfate: step 1/3. In terms of biological role, with CysD forms the ATP sulfurylase (ATPS) that catalyzes the adenylation of sulfate producing adenosine 5'-phosphosulfate (APS) and diphosphate, the first enzymatic step in sulfur assimilation pathway. APS synthesis involves the formation of a high-energy phosphoric-sulfuric acid anhydride bond driven by GTP hydrolysis by CysN coupled to ATP hydrolysis by CysD. The sequence is that of Sulfate adenylyltransferase subunit 1 from Vibrio cholerae serotype O1 (strain M66-2).